The sequence spans 311 residues: Methionyl-tRNA formyltransferase (311 aa).

Ser-112 to Pro-115 lines the (6S)-5,6,7,8-tetrahydrofolate pocket.

Belongs to the Fmt family.

The enzyme catalyses L-methionyl-tRNA(fMet) + (6R)-10-formyltetrahydrofolate = N-formyl-L-methionyl-tRNA(fMet) + (6S)-5,6,7,8-tetrahydrofolate + H(+). Attaches a formyl group to the free amino group of methionyl-tRNA(fMet). The formyl group appears to play a dual role in the initiator identity of N-formylmethionyl-tRNA by promoting its recognition by IF2 and preventing the misappropriation of this tRNA by the elongation apparatus. This Rhizobium etli (strain ATCC 51251 / DSM 11541 / JCM 21823 / NBRC 15573 / CFN 42) protein is Methionyl-tRNA formyltransferase.